The sequence spans 201 residues: Large ribosomal subunit protein uL4 (201 aa).

The tract at residues 44–68 is disordered; the sequence is RAQKSRADVSGSGRKPWRQKGTGRA.

Belongs to the universal ribosomal protein uL4 family. In terms of assembly, part of the 50S ribosomal subunit.

Its function is as follows. One of the primary rRNA binding proteins, this protein initially binds near the 5'-end of the 23S rRNA. It is important during the early stages of 50S assembly. It makes multiple contacts with different domains of the 23S rRNA in the assembled 50S subunit and ribosome. In terms of biological role, forms part of the polypeptide exit tunnel. This Buchnera aphidicola subsp. Schizaphis graminum (strain Sg) protein is Large ribosomal subunit protein uL4.